A 212-amino-acid chain; its full sequence is Pyridoxine/pyridoxamine 5'-phosphate oxidase (212 aa).

Residues 7–10 and Lys-66 each bind substrate; that span reads RREY. FMN is bound by residues 61 to 66, 76 to 77, Arg-82, Lys-83, and Gln-105; these read RIVLLK and YT. Positions 123, 127, and 131 each coordinate substrate. FMN is bound by residues 140 to 141 and Trp-185; that span reads QS. 191-193 lines the substrate pocket; that stretch reads RLH. Position 195 (Arg-195) interacts with FMN.

Belongs to the pyridoxamine 5'-phosphate oxidase family. As to quaternary structure, homodimer. It depends on FMN as a cofactor.

The catalysed reaction is pyridoxamine 5'-phosphate + O2 + H2O = pyridoxal 5'-phosphate + H2O2 + NH4(+). It catalyses the reaction pyridoxine 5'-phosphate + O2 = pyridoxal 5'-phosphate + H2O2. It functions in the pathway cofactor metabolism; pyridoxal 5'-phosphate salvage; pyridoxal 5'-phosphate from pyridoxamine 5'-phosphate: step 1/1. Its pathway is cofactor metabolism; pyridoxal 5'-phosphate salvage; pyridoxal 5'-phosphate from pyridoxine 5'-phosphate: step 1/1. In terms of biological role, catalyzes the oxidation of either pyridoxine 5'-phosphate (PNP) or pyridoxamine 5'-phosphate (PMP) into pyridoxal 5'-phosphate (PLP). The polypeptide is Pyridoxine/pyridoxamine 5'-phosphate oxidase (Hahella chejuensis (strain KCTC 2396)).